A 249-amino-acid polypeptide reads, in one-letter code: MLDSLSVLNFYSLASLEVGQHWYWHIGGLKIHGQVIAVSWIVFAILIIASIAATRKIQKVPSGIQNLMEYVLEFLRDLAKNQLGEKEYRPWLPFIGTLFLFIFVSNWLGALIPWKLIELPEGELAAPTNDINTTVALALLTSLAYFYAGISKKGLGYFAHYLEPIPVLLPIKILEDFTKPLSLSFRLFGNILADELVVAVLVFLVPLVVPLPLMALGLFTSAIQALVFATLAGAYIHEALESEHEEEHA.

The next 5 helical transmembrane spans lie at 33–53 (GQVI…SIAA), 92–112 (LPFI…GALI), 131–151 (INTT…AGIS), 196–216 (LVVA…LMAL), and 217–237 (GLFT…AYIH).

This sequence belongs to the ATPase A chain family. As to quaternary structure, F-type ATPases have 2 components, CF(1) - the catalytic core - and CF(0) - the membrane proton channel. CF(1) has five subunits: alpha(3), beta(3), gamma(1), delta(1), epsilon(1). CF(0) has four main subunits: a, b, b' and c.

The protein localises to the cellular thylakoid membrane. In terms of biological role, key component of the proton channel; it plays a direct role in the translocation of protons across the membrane. The protein is ATP synthase subunit a of Microcystis aeruginosa (strain NIES-843 / IAM M-2473).